Here is an 83-residue protein sequence, read N- to C-terminus: Small ribosomal subunit protein uS17 (83 aa).

It belongs to the universal ribosomal protein uS17 family. As to quaternary structure, part of the 30S ribosomal subunit.

One of the primary rRNA binding proteins, it binds specifically to the 5'-end of 16S ribosomal RNA. This Chlamydia abortus (strain DSM 27085 / S26/3) (Chlamydophila abortus) protein is Small ribosomal subunit protein uS17.